Reading from the N-terminus, the 704-residue chain is MYNIPDNVKGAVEFDPWLKPFADVLSERRYLADKWLYDITHATPDGSYQSLSKFARDSYKSYGLHANPETKEITYKEWAPNAERAFLVGDFNNWDTTSHELKNKDEFGNFTITLHPLPNGDFAIPHDSKIKVMFILPDGSKIFRLPAWITRATQPSKETSKQFGPAYEGRFWNPENPYKFVHPRPKFSESVDSLRIYEAHVGISSPEPKITTYKEFTEKVLPRIKYLGYDAIQLMAIMEHAYYASFGYQVTNFFAASSRFGTPEELKELIDTAHSMGILVLLDVVHSHASKNVEDGLNMFDGSDHQYFHSISSGRGEHPLWDSRLFNYGKFEVQRFLLANLAFYVDVYQFDGFRFDGVTSMLYVHHGVGAGGSFSGDYNEYLSRDRSFVDHEALAYLMLANDLVHEMLPNLAVTVAEDVSGYPTLCLPRSIGGTGFDYRLAMALPDMWIKLIKEKKDDEWEMGSIVYTLTNRRYGEKVVAYCESHDQALVGDKTLAFWLMDAAMYTDMTVLKEPSIVIDRGIALHKMIRLITHSLGGEAYLNFEGNEFGHPEWLDFPNVNNGDSYKYARRQFNLADDPLLRYQNLNEFDRSMQLCEKRHKWLNTKQAYVSLKHEGDKMIVFERNNLLFIFNFHPTNSYSDYRVGVEKAGTYHIVLNSDRAEFGGHNRINESSEFFTTDLEWNNRKNFLQVYIPSRVALVLALKE.

(1,4-alpha-D-glucosyl)n is bound by residues Trp94 and Lys131. Ser190 is subject to Phosphoserine. The active-site Nucleophile is the Asp356. Glu417 (proton donor) is an active-site residue.

The protein belongs to the glycosyl hydrolase 13 family. GlgB subfamily.

The protein localises to the cytoplasm. It catalyses the reaction Transfers a segment of a (1-&gt;4)-alpha-D-glucan chain to a primary hydroxy group in a similar glucan chain.. It functions in the pathway glycan biosynthesis; glycogen biosynthesis. Functionally, glycogen-branching enzyme participates in the glycogen biosynthetic process along with glycogenin and glycogen synthase. Generates alpha-1,6-glucosidic branches from alpha-1,4-linked glucose chains, to increase solubility of the glycogen polymer. In Saccharomyces cerevisiae (strain ATCC 204508 / S288c) (Baker's yeast), this protein is 1,4-alpha-glucan-branching enzyme (GLC3).